Consider the following 981-residue polypeptide: Beta-glucuronidase (981 aa).

Catalysis depends on Glu-500, which acts as the Nucleophile. Mg(2+) is bound by residues Asn-561, Trp-562, Ile-563, Ser-581, and Glu-583.

It belongs to the glycosyl hydrolase 2 family.

It localises to the periplasm. It catalyses the reaction a beta-D-glucuronoside + H2O = D-glucuronate + an alcohol. Its function is as follows. Beta-glucuronidase involved in ulvan degradation. Ulvan is the main polysaccharide component of the Ulvales (green seaweed) cell wall. It is composed of disaccharide building blocks comprising 3-sulfated rhamnose (Rha3S) linked to D-glucuronic acid (GlcA), L-iduronic acid (IduA), or D-xylose (Xyl). Beta-glucuronidase removes GlcA side chains present on some O2 residues of Rha3S. Can remove the GlcA side chains from polymeric ulvan or from smaller oligomers. The chain is Beta-glucuronidase from Formosa agariphila (strain DSM 15362 / KCTC 12365 / LMG 23005 / KMM 3901 / M-2Alg 35-1).